Here is a 336-residue protein sequence, read N- to C-terminus: TBC1 domain family member 21 (336 aa).

A Rab-GAP TBC domain is found at 57-265 (GLHPFVRTEA…RLWEVLLTGK (209 aa)).

Interacts with ACTB. Interacts with ARMC12. Interacts with TOMM20 and DNAH7. Interacts with RAP1A. Interacts with RAB10. As to expression, expressed in testis, specifically in elongating and elongated spermatids (at protein level). Expressed in the sperm midpiece (at protein level).

It is found in the cytoplasmic vesicle. Its subcellular location is the secretory vesicle. The protein localises to the acrosome. It localises to the cytoplasm. The protein resides in the cytoskeleton. Acts as a GTPase-activating protein for Rab family protein (s). Essential for the establishment of male fertility, and is required for both the production of normal sperm number and sperm function. Plays an important role in the formation of intact mitochondria, outer dense fibers and axoneme within the sperm tail. Essential for sperm mitochondrial sheath formation and for the interactions of ARMC12 with VDAC2 and VDAC3. May be involved in acrosome formation and cytoskeletal reorganization during spermiogenesis, possibly by regulating RAB3A activity. In Mus musculus (Mouse), this protein is TBC1 domain family member 21.